The sequence spans 669 residues: UvrABC system protein B (669 aa).

The Helicase ATP-binding domain maps to 26–183 (TNFHAGIAKQ…RHLTELQYTR (158 aa)). 39–46 (GVTGSGKT) is a binding site for ATP. Positions 92-115 (YYDYYQPEAYVPASDTFIEKDSSI) match the Beta-hairpin motif. In terms of domain architecture, Helicase C-terminal spans 431–597 (QVDDLISQIN…SVVRPISDIL (167 aa)). A UVR domain is found at 631–666 (AAQMKMLEQQMYQHARDLEFEDAARIRDQIQRLREA).

It belongs to the UvrB family. As to quaternary structure, forms a heterotetramer with UvrA during the search for lesions. Interacts with UvrC in an incision complex.

The protein localises to the cytoplasm. Its function is as follows. The UvrABC repair system catalyzes the recognition and processing of DNA lesions. A damage recognition complex composed of 2 UvrA and 2 UvrB subunits scans DNA for abnormalities. Upon binding of the UvrA(2)B(2) complex to a putative damaged site, the DNA wraps around one UvrB monomer. DNA wrap is dependent on ATP binding by UvrB and probably causes local melting of the DNA helix, facilitating insertion of UvrB beta-hairpin between the DNA strands. Then UvrB probes one DNA strand for the presence of a lesion. If a lesion is found the UvrA subunits dissociate and the UvrB-DNA preincision complex is formed. This complex is subsequently bound by UvrC and the second UvrB is released. If no lesion is found, the DNA wraps around the other UvrB subunit that will check the other stand for damage. This chain is UvrABC system protein B, found in Xylella fastidiosa (strain M12).